The chain runs to 341 residues: L-threonine 3-dehydrogenase (341 aa).

C38 contributes to the Zn(2+) binding site. Residues T40 and H43 each act as charge relay system in the active site. Residues H63, E64, C93, C96, C99, and C107 each coordinate Zn(2+). NAD(+) contacts are provided by residues I175, D195, R200, 262–264 (LGI), and 286–287 (IY).

Belongs to the zinc-containing alcohol dehydrogenase family. Homotetramer. It depends on Zn(2+) as a cofactor.

It localises to the cytoplasm. The catalysed reaction is L-threonine + NAD(+) = (2S)-2-amino-3-oxobutanoate + NADH + H(+). It functions in the pathway amino-acid degradation; L-threonine degradation via oxydo-reductase pathway; glycine from L-threonine: step 1/2. Functionally, catalyzes the NAD(+)-dependent oxidation of L-threonine to 2-amino-3-ketobutyrate. This Enterobacter sp. (strain 638) protein is L-threonine 3-dehydrogenase.